Here is an 825-residue protein sequence, read N- to C-terminus: Thioredoxin domain-containing protein 16 (825 aa).

The N-terminal stretch at 1–27 (MFSGFNVFRVGISFVIMCIFYMPTVNS) is a signal peptide. Residues 392 to 495 (LTVELTEETF…EDLLKFIQLN (104 aa)) enclose the Thioredoxin domain. A disulfide bond links Cys-449 and Cys-456. A glycan (N-linked (GlcNAc...) asparagine) is linked at Asn-460. Residues 762-787 (RKVPKCMKETDVQENDKEQHEDKSAV) form a disordered region. A compositionally biased stretch (basic and acidic residues) spans 767–787 (CMKETDVQENDKEQHEDKSAV). Positions 816–819 (DKEL) match the Mediates endoplasmic reticulum retention motif.

As to quaternary structure, interacts with FOXRED2. Post-translationally, glycosylated.

It localises to the secreted. The protein resides in the endoplasmic reticulum lumen. In Homo sapiens (Human), this protein is Thioredoxin domain-containing protein 16.